Reading from the N-terminus, the 254-residue chain is Myeloblastin (254 aa).

The first 27 residues, 1–27, serve as a signal peptide directing secretion; it reads MSGSYPSPKGIHPFLLLALVVGGAVQA. The propeptide occupies 28 to 29; the sequence is SK. The region spanning 30-250 is the Peptidase S1 domain; the sequence is IVGGHEARPH…YVDWIQNVLR (221 aa). A disulfide bridge connects residues C58 and C74. Residues H73 and D120 each act as charge relay system in the active site. N-linked (GlcNAc...) asparagine glycosylation is found at N127 and N176. 3 cysteine pairs are disulfide-bonded: C154–C211, C184–C190, and C201–C226. The Charge relay system role is filled by S205. The propeptide occupies 251 to 254; that stretch reads GAEP.

It belongs to the peptidase S1 family. Elastase subfamily. In terms of assembly, may form dimers. Interacts with CD177; the interaction tethers PRTN3 to the cell surface; the interaction is direct. Interacts with SERPINB1. Interacts with ADGRG3.

The protein localises to the lysosome. Its subcellular location is the secreted. The protein resides in the cell membrane. It localises to the membrane raft. It catalyses the reaction Hydrolysis of proteins, including elastin, by preferential cleavage: -Ala-|-Xaa- &gt; -Val-|-Xaa-.. In terms of biological role, serine protease that degrades elastin, fibronectin, laminin, vitronectin, and collagen types I, III, and IV (in vitro). By cleaving and activating receptor F2RL1/PAR-2, enhances endothelial cell barrier function and thus vascular integrity during neutrophil transendothelial migration. May play a role in neutrophil transendothelial migration, probably when associated with CD177. Triggers inflammatory processes in neutrophils by interacting with ADGRG3 upstream of F2RL1/PAR2 activation. The sequence is that of Myeloblastin (Prtn3) from Mus musculus (Mouse).